A 109-amino-acid chain; its full sequence is MKLIVAVVQDQDSNRLLKTLTDHNFRVTKLATTGGFLKSGNTTFMIGVEDIRVNKALSLIKENGQKRDQMIAPVSPMGGNADSYVPYPVEVEVGGATVFVLPVDEFHQF.

The 3',3'-c-di-AMP site is built by Thr-21, Phe-25, Thr-28, Gly-35, Phe-36, Leu-37, Asn-41, Gly-47, Glu-92, and Gly-94.

In terms of assembly, homotrimer.

Its subcellular location is the cytoplasm. Its function is as follows. Binds cyclic di-AMP (c-di-AMP) and is probably involved in c-di-AMP-mediated signaling pathways. In vitro, can also bind cyclic GMP-AMP (3'3'-cGAMP), with lower affinity, but not c-di-GMP or 2'3'-cGAMP. The protein is Cyclic di-AMP receptor A of Bacillus subtilis (strain 168).